We begin with the raw amino-acid sequence, 667 residues long: Endogenous retrovirus group K member 5 Gag polyprotein (667 aa).

Glycine 2 is lipidated: N-myristoyl glycine. Residues 166-188 (KGPELVGPSESKPRGPSPLPAGQ) are disordered. CCHC-type zinc fingers lie at residues 543 to 560 (KKCY…SCPV) and 580 to 597 (GLCP…QCHS). The tract at residues 598 to 667 (KFDKDGQPLS…CPAPQQAAPQ (70 aa)) is disordered. The span at 648 to 667 (GVSQLQQSNSCPAPQQAAPQ) shows a compositional bias: polar residues.

Belongs to the beta type-B retroviral Gag protein family. HERV class-II K(HML-2) gag subfamily. Myristoylation is essential for retroviral assembly. Alteration of the glycine residue leads to a block in the budding of particles and an accumulation of Gag inside the cell. In terms of processing, specific enzymatic cleavages may yield mature proteins.

The protein localises to the cell membrane. In terms of biological role, the products of the Gag polyproteins of infectious retroviruses perform highly complex orchestrated tasks during the assembly, budding, maturation, and infection stages of the viral replication cycle. During viral assembly, the proteins form membrane associations and self-associations that ultimately result in budding of an immature virion from the infected cell. Gag precursors also function during viral assembly to selectively bind and package two plus strands of genomic RNA. Endogenous Gag proteins may have kept, lost or modified their original function during evolution. The sequence is that of Endogenous retrovirus group K member 5 Gag polyprotein (ERVK-5) from Homo sapiens (Human).